The sequence spans 288 residues: Probable ketoamine kinase VC_1539 (288 aa).

Asparagine 92–leucine 94 is a binding site for ATP. Aspartate 195 acts as the Proton acceptor in catalysis.

This sequence belongs to the fructosamine kinase family.

In terms of biological role, ketoamine kinase that phosphorylates ketoamines on the third carbon of the sugar moiety to generate ketoamine 3-phosphate. The sequence is that of Probable ketoamine kinase VC_1539 from Vibrio cholerae serotype O1 (strain ATCC 39315 / El Tor Inaba N16961).